Reading from the N-terminus, the 129-residue chain is MRHYEIVFMVHPDQSEQVAGMIERYTGSITEAGGKIHRLEDWGRRQLAYPINKLHKAHYVLMNVEAGQEVIDELETAFRFNDAVLRNMIMRTKAAITEQSIMLKQKEERAERAPRREERAEAKPEAAAE.

The disordered stretch occupies residues Leu-103 to Glu-129. The span at Lys-104–Glu-129 shows a compositional bias: basic and acidic residues.

Belongs to the bacterial ribosomal protein bS6 family.

Its function is as follows. Binds together with bS18 to 16S ribosomal RNA. The sequence is that of Small ribosomal subunit protein bS6 from Vibrio campbellii (strain ATCC BAA-1116).